The chain runs to 454 residues: Serine/threonine-protein kinase NLK2 (454 aa).

Positions 67-356 (PEPDRPIGYG…AKDALAHPYL (290 aa)) constitute a Protein kinase domain. ATP contacts are provided by residues 73–81 (IGYGAFGVV) and K96. The active-site Proton acceptor is D193.

It belongs to the protein kinase superfamily. CMGC Ser/Thr protein kinase family. MAP kinase subfamily. Interacts with sox11, hmgxb4/hmg2l1, rnf138/narf, stat3.1 and mef2a. The cofactor is Mg(2+).

The protein localises to the nucleus. Its subcellular location is the cytoplasm. It carries out the reaction L-seryl-[protein] + ATP = O-phospho-L-seryl-[protein] + ADP + H(+). The catalysed reaction is L-threonyl-[protein] + ATP = O-phospho-L-threonyl-[protein] + ADP + H(+). Activated by tyrosine and threonine phosphorylation. Functionally, negatively regulates Wnt/beta-catenin-signaling during development. Plays a role together with sox11 in neural induction during early embryogenesis. Involved in TGFbeta-mediated mesoderm induction in early embryos, acting downstream of map3k7/tak1 to phosphorylate stat3. Augments the rnf138/narf-directed ubiquitination and degradation of tcf/lef by enhancing the association of rnf138/narf and tcf/lef. Phosphorylates mef2a to play a role in anterior neural development, including eye formation. The protein is Serine/threonine-protein kinase NLK2 (nlk.2) of Xenopus tropicalis (Western clawed frog).